The following is a 202-amino-acid chain: dITP/XTP pyrophosphatase (202 aa).

10-15 (TGNAGK) lines the substrate pocket. Asp46 and Asp75 together coordinate Mg(2+). Asp75 serves as the catalytic Proton acceptor. Residues Ser76, 160–163 (FGYD), Lys183, and 188–189 (HR) contribute to the substrate site.

The protein belongs to the HAM1 NTPase family. In terms of assembly, homodimer. The cofactor is Mg(2+).

The catalysed reaction is XTP + H2O = XMP + diphosphate + H(+). It carries out the reaction dITP + H2O = dIMP + diphosphate + H(+). The enzyme catalyses ITP + H2O = IMP + diphosphate + H(+). Pyrophosphatase that catalyzes the hydrolysis of nucleoside triphosphates to their monophosphate derivatives, with a high preference for the non-canonical purine nucleotides XTP (xanthosine triphosphate), dITP (deoxyinosine triphosphate) and ITP. Seems to function as a house-cleaning enzyme that removes non-canonical purine nucleotides from the nucleotide pool, thus preventing their incorporation into DNA/RNA and avoiding chromosomal lesions. The sequence is that of dITP/XTP pyrophosphatase from Idiomarina loihiensis (strain ATCC BAA-735 / DSM 15497 / L2-TR).